A 342-amino-acid chain; its full sequence is L-threonine 3-dehydrogenase (342 aa).

Position 38 (cysteine 38) interacts with Zn(2+). Active-site charge relay system residues include threonine 40 and histidine 43. Positions 63, 64, 93, 96, 99, and 107 each coordinate Zn(2+). NAD(+)-binding positions include isoleucine 175, aspartate 195, arginine 200, 262–264, and 286–287; these read LGI and IY.

It belongs to the zinc-containing alcohol dehydrogenase family. Homotetramer. The cofactor is Zn(2+).

The protein localises to the cytoplasm. It carries out the reaction L-threonine + NAD(+) = (2S)-2-amino-3-oxobutanoate + NADH + H(+). Its pathway is amino-acid degradation; L-threonine degradation via oxydo-reductase pathway; glycine from L-threonine: step 1/2. Catalyzes the NAD(+)-dependent oxidation of L-threonine to 2-amino-3-ketobutyrate. This chain is L-threonine 3-dehydrogenase, found in Burkholderia cenocepacia (strain HI2424).